A 449-amino-acid chain; its full sequence is Glucose-6-phosphate isomerase (449 aa).

Residue Glu-291 is the Proton donor of the active site. Residues His-312 and Lys-426 contribute to the active site.

This sequence belongs to the GPI family.

It is found in the cytoplasm. It catalyses the reaction alpha-D-glucose 6-phosphate = beta-D-fructose 6-phosphate. Its pathway is carbohydrate biosynthesis; gluconeogenesis. It participates in carbohydrate degradation; glycolysis; D-glyceraldehyde 3-phosphate and glycerone phosphate from D-glucose: step 2/4. In terms of biological role, catalyzes the reversible isomerization of glucose-6-phosphate to fructose-6-phosphate. The protein is Glucose-6-phosphate isomerase of Streptococcus pyogenes serotype M4 (strain MGAS10750).